The chain runs to 322 residues: 6-deoxy-6-sulfo-D-fructose transketolase subunit SqwH (322 aa).

It belongs to the transketolase family. Forms a complex with SqwG. Thiamine diphosphate is required as a cofactor.

The catalysed reaction is 6-deoxy-6-sulfo-D-fructose + D-glyceraldehyde 3-phosphate = 4-deoxy-4-sulfo-D-erythrose + D-xylulose 5-phosphate. The enzyme catalyses 4-deoxy-4-sulfo-D-erythrulose + D-glyceraldehyde 3-phosphate = sulfoacetaldehyde + D-xylulose 5-phosphate. Its function is as follows. Part of the sulfo-TK pathway, a D-sulfoquinovose degradation pathway that produces 2-hydroxyethane-1-sulfonate (isethionate). Catalyzes two steps of the pathway: the formation of 4-deoxy-4-sulfoerythrose (SE) and xylulose 5-phosphate from 6-deoxy-6-sulfo-D-fructose (SF) and glyceraldehyde 3-phosphate, and the formation of sulfoacetaldehyde (SA) and xylulose 5-phosphate from 4-deoxy-4-sulfo-D-erythrulose (SEu) and glyceraldehyde 3-phosphate. The chain is 6-deoxy-6-sulfo-D-fructose transketolase subunit SqwH from Clostridium sp. (strain MSTE9).